We begin with the raw amino-acid sequence, 237 residues long: Large ribosomal subunit protein uL1 (237 aa).

This sequence belongs to the universal ribosomal protein uL1 family. Part of the 50S ribosomal subunit.

Binds directly to 23S rRNA. The L1 stalk is quite mobile in the ribosome, and is involved in E site tRNA release. In terms of biological role, protein L1 is also a translational repressor protein, it controls the translation of the L11 operon by binding to its mRNA. The polypeptide is Large ribosomal subunit protein uL1 (Leptothrix cholodnii (strain ATCC 51168 / LMG 8142 / SP-6) (Leptothrix discophora (strain SP-6))).